The sequence spans 119 residues: Protein TusC (119 aa).

It belongs to the DsrF/TusC family. In terms of assembly, heterohexamer, formed by a dimer of trimers. The hexameric TusBCD complex contains 2 copies each of TusB, TusC and TusD. The TusBCD complex interacts with TusE.

It localises to the cytoplasm. Functionally, part of a sulfur-relay system required for 2-thiolation of 5-methylaminomethyl-2-thiouridine (mnm(5)s(2)U) at tRNA wobble positions. This Pectobacterium atrosepticum (strain SCRI 1043 / ATCC BAA-672) (Erwinia carotovora subsp. atroseptica) protein is Protein TusC.